Consider the following 284-residue polypeptide: GPN-loop GTPase 3 (284 aa).

13-18 is a GTP binding site; that stretch reads GSGKST. The Gly-Pro-Asn (GPN)-loop; involved in dimer interface motif lies at 72 to 74; the sequence is GPN. 174–177 serves as a coordination point for GTP; the sequence is TKMD. The interval 262–284 is disordered; sequence EPREHEEESSSMFDEYFQERQNE.

Belongs to the GPN-loop GTPase family. Heterodimer with GPN1. Binds to RNA polymerase II (RNAPII). Interacts directly with subunits RPB4 and RPB7 and the CTD of RPB1.

Small GTPase required for proper localization of RNA polymerase II (RNAPII). May act at an RNAP assembly step prior to nuclear import. This is GPN-loop GTPase 3 from Mus musculus (Mouse).